The chain runs to 277 residues: Small ribosomal subunit protein uS2 (277 aa).

2 stretches are compositionally biased toward basic and acidic residues: residues 227–256 (QARA…RTEA) and 267–277 (SEAKAEGNTEA). Positions 227–277 (QARAERQEAAAKEAAGDADKAPAEAERTEAPAEEAPAEAQSEAKAEGNTEA) are disordered.

This sequence belongs to the universal ribosomal protein uS2 family.

The polypeptide is Small ribosomal subunit protein uS2 (Corynebacterium jeikeium (strain K411)).